We begin with the raw amino-acid sequence, 158 residues long: MHKRAIYPGTFDPVTNGHADLIERAAKLFQHVVIGIAANPSKQPRFTLDERVQLLKLVTAHLDNVEVVGFSGLLVDFAKDQQASVLVRGLRAVSDFEYEFQLANMNRRLDPDLESVFLTPSEENSFISSTLVKEVALHGGDVSQFVHPEVSKALLSKG.

Thr-10 serves as a coordination point for substrate. ATP-binding positions include 10 to 11 (TF) and His-18. Substrate is bound by residues Lys-42, Leu-74, and Arg-88. Residues 89–91 (GLR), Glu-99, and 124–130 (NSFISST) each bind ATP.

This sequence belongs to the bacterial CoaD family. Homohexamer. Mg(2+) serves as cofactor.

The protein localises to the cytoplasm. It catalyses the reaction (R)-4'-phosphopantetheine + ATP + H(+) = 3'-dephospho-CoA + diphosphate. The protein operates within cofactor biosynthesis; coenzyme A biosynthesis; CoA from (R)-pantothenate: step 4/5. Reversibly transfers an adenylyl group from ATP to 4'-phosphopantetheine, yielding dephospho-CoA (dPCoA) and pyrophosphate. This is Phosphopantetheine adenylyltransferase from Shewanella woodyi (strain ATCC 51908 / MS32).